Reading from the N-terminus, the 112-residue chain is Peptidyl-tRNA hydrolase (112 aa).

Belongs to the PTH2 family.

It is found in the cytoplasm. It catalyses the reaction an N-acyl-L-alpha-aminoacyl-tRNA + H2O = an N-acyl-L-amino acid + a tRNA + H(+). Its function is as follows. The natural substrate for this enzyme may be peptidyl-tRNAs which drop off the ribosome during protein synthesis. This is Peptidyl-tRNA hydrolase from Haloquadratum walsbyi (strain DSM 16790 / HBSQ001).